The chain runs to 893 residues: cGMP-specific 3',5'-cyclic phosphodiesterase (893 aa).

GAF domains follow at residues 21-173 (DIDV…GIGI) and 205-390 (NLEC…GLGI). Residues 420 to 743 (GQDQTEKLIQ…RNWQDLAEKV (324 aa)) form the PDEase domain. H496 serves as the catalytic Proton donor. A divalent metal cation contacts are provided by H500, H536, D537, and D647. 2 disordered regions span residues 784–807 (QQSQ…RLSI) and 844–893 (HVSE…CALL). 2 stretches are compositionally biased toward basic and acidic residues: residues 789–800 (GGDDSHTPEHQR) and 844–853 (HVSEDMDDKS). Residues 864–880 (SVGRMSASSSTSSAGTV) show a composition bias toward low complexity. Basic residues predominate over residues 883 to 893 (SKKRSKLCALL). At C890 the chain carries Cysteine methyl ester. C890 carries the S-farnesyl cysteine lipid modification. Positions 891–893 (ALL) are cleaved as a propeptide — removed in mature form.

Belongs to the cyclic nucleotide phosphodiesterase family. Interacts with PrBP. A divalent metal cation is required as a cofactor.

It localises to the cell membrane. It carries out the reaction 3',5'-cyclic GMP + H2O = GMP + H(+). Functionally, has a role regulating cGMP transport in Malpighian tubule principal cells. This is cGMP-specific 3',5'-cyclic phosphodiesterase from Drosophila virilis (Fruit fly).